A 570-amino-acid chain; its full sequence is Serine/threonine-protein kinase STY17 (570 aa).

Residues 112–145 are disordered; the sequence is LNGNSGDVDPSDPAVNEDAQSSYNSRSLAPPTFG. Over residues 129–145 the composition is skewed to polar residues; the sequence is DAQSSYNSRSLAPPTFG. Positions 180–260 constitute an ACT domain; the sequence is EITFSTIDRP…PCSKQKSITF (81 aa). The 254-residue stretch at 292 to 545 folds into the Protein kinase domain; sequence LKIEKKVACG…EIIEMLNQLI (254 aa). ATP contacts are provided by residues 298–306 and Lys-319; that span reads VACGSYGEL. The Proton acceptor role is filled by Asp-413. Ser-441 bears the Phosphoserine mark. A Phosphothreonine modification is found at Thr-445.

This sequence belongs to the protein kinase superfamily. Ser/Thr protein kinase family. Autophosphorylated on serine and threonine residues. Autophosphorylated at Thr-445.

The protein localises to the cytoplasm. It localises to the cytosol. It catalyses the reaction L-seryl-[protein] + ATP = O-phospho-L-seryl-[protein] + ADP + H(+). The catalysed reaction is L-threonyl-[protein] + ATP = O-phospho-L-threonyl-[protein] + ADP + H(+). Activated by autophosphorylation at Thr-445. Functionally, serine/threonine protein kinase that specifically phosphorylates chloroplast precursor proteins in the cytosol within the cleavable presequences (transit peptides). May be part of a cytosolic regulatory network involved in chloroplast protein import. Does not phosphorylate mitochondrion precursor proteins. Specific for ATP and does not utilize other NTPs. Plays a role in chloroplast biogenesis and differentiation in cotyledons, possibly through phosphorylation of chloroplast preproteins. This is Serine/threonine-protein kinase STY17 from Arabidopsis thaliana (Mouse-ear cress).